A 23-amino-acid polypeptide reads, in one-letter code: Acidic phospholipase A2 Ts-A5 (23 aa).

It depends on Ca(2+) as a cofactor. Contains 7 disulfide bonds. In terms of tissue distribution, expressed by the venom gland.

It is found in the secreted. The enzyme catalyses a 1,2-diacyl-sn-glycero-3-phosphocholine + H2O = a 1-acyl-sn-glycero-3-phosphocholine + a fatty acid + H(+). In terms of biological role, snake venom phospholipase A2 (PLA2) that shows a moderate inhibition of ADP-induced human platelet aggregation when tested on platelet rich plasma. Exhibits high hydrolytic activities and prefers the anionic micelles (dPPC with deoxycholate) to the zwitterionic micelles (dPPC with Triton X-100). PLA2 catalyzes the calcium-dependent hydrolysis of the 2-acyl groups in 3-sn-phosphoglycerides. The sequence is that of Acidic phospholipase A2 Ts-A5 from Trimeresurus stejnegeri (Chinese green tree viper).